Reading from the N-terminus, the 339-residue chain is Ketol-acid reductoisomerase (NADP(+)) (339 aa).

Positions 1–182 (MRVYYDRDAD…GGGRAGIIET (182 aa)) constitute a KARI N-terminal Rossmann domain. NADP(+) is bound by residues 24-27 (YGSQ), R48, S51, and 83-86 (DEGQ). H108 is an active-site residue. G134 contributes to the NADP(+) binding site. A KARI C-terminal knotted domain is found at 183–328 (SFKEEVETDL…EKLRGMMPWI (146 aa)). Residues D191, E195, E227, and E231 each contribute to the Mg(2+) site. A substrate-binding site is contributed by S252.

This sequence belongs to the ketol-acid reductoisomerase family. Requires Mg(2+) as cofactor.

It catalyses the reaction (2R)-2,3-dihydroxy-3-methylbutanoate + NADP(+) = (2S)-2-acetolactate + NADPH + H(+). The catalysed reaction is (2R,3R)-2,3-dihydroxy-3-methylpentanoate + NADP(+) = (S)-2-ethyl-2-hydroxy-3-oxobutanoate + NADPH + H(+). It functions in the pathway amino-acid biosynthesis; L-isoleucine biosynthesis; L-isoleucine from 2-oxobutanoate: step 2/4. The protein operates within amino-acid biosynthesis; L-valine biosynthesis; L-valine from pyruvate: step 2/4. Its function is as follows. Involved in the biosynthesis of branched-chain amino acids (BCAA). Catalyzes an alkyl-migration followed by a ketol-acid reduction of (S)-2-acetolactate (S2AL) to yield (R)-2,3-dihydroxy-isovalerate. In the isomerase reaction, S2AL is rearranged via a Mg-dependent methyl migration to produce 3-hydroxy-3-methyl-2-ketobutyrate (HMKB). In the reductase reaction, this 2-ketoacid undergoes a metal-dependent reduction by NADPH to yield (R)-2,3-dihydroxy-isovalerate. The sequence is that of Ketol-acid reductoisomerase (NADP(+)) from Gluconacetobacter diazotrophicus (strain ATCC 49037 / DSM 5601 / CCUG 37298 / CIP 103539 / LMG 7603 / PAl5).